Consider the following 265-residue polypeptide: Undecaprenyl-diphosphatase (265 aa).

The next 7 helical transmembrane spans lie at 38–58 (RSDF…CLAL), 75–95 (RDYV…GLIV), 108–128 (PVAW…HVAG), 135–155 (VVTW…GVFP), 181–201 (FVFM…LLEM), 215–235 (VAVA…WLLS), and 244–264 (VFAV…PAAA).

Belongs to the UppP family.

It is found in the cell inner membrane. It carries out the reaction di-trans,octa-cis-undecaprenyl diphosphate + H2O = di-trans,octa-cis-undecaprenyl phosphate + phosphate + H(+). In terms of biological role, catalyzes the dephosphorylation of undecaprenyl diphosphate (UPP). Confers resistance to bacitracin. The polypeptide is Undecaprenyl-diphosphatase (Xanthomonas oryzae pv. oryzae (strain MAFF 311018)).